A 208-amino-acid chain; its full sequence is Putative speedy protein E7 (208 aa).

Belongs to the Speedy/Ringo family.

This is Putative speedy protein E7 (SPDYE7P) from Homo sapiens (Human).